A 150-amino-acid chain; its full sequence is 3-hydroxyacyl-[acyl-carrier-protein] dehydratase FabZ (150 aa).

Residue H53 is part of the active site.

The protein belongs to the thioester dehydratase family. FabZ subfamily.

Its subcellular location is the cytoplasm. The catalysed reaction is a (3R)-hydroxyacyl-[ACP] = a (2E)-enoyl-[ACP] + H2O. Its function is as follows. Involved in unsaturated fatty acids biosynthesis. Catalyzes the dehydration of short chain beta-hydroxyacyl-ACPs and long chain saturated and unsaturated beta-hydroxyacyl-ACPs. This is 3-hydroxyacyl-[acyl-carrier-protein] dehydratase FabZ from Proteus mirabilis (strain HI4320).